The chain runs to 381 residues: MGVKGLNQLIKEHSPGAFKEFQLKNLFGRKVAIDASMCLYQFLIAVRQSDGQQLTNESGETTSHLSGMFYRTIRMVENNIKPVYVFDGKPPVLKGGELEKRLLKREEAQKQIDSIKDTGTVAEVMKFEKRLVRVSREQNDEAKKLLELMGIPYVNAPCEAEAQCAELARTGKVFAAASEDMDTLCYEPPYLLRHLTFAEARKMPINQITYSEAIAGLEMTKPQFIDMCILLGCDYCETIKGVGPVTAYKLIKEHGSLEKIIEHINSNPTSKYKVPENWPYDEARQLFMDPEVTKGEEVTLKWKEPDVEGLIQYMVREKGFSEDRIRSGAEKLKKGLKTGVQGRLDGFFSVVAKPGAKAGDKKGDKKRGSDSKASNNKKKRK.

The N-domain stretch occupies residues 1-105 (MGVKGLNQLI…GELEKRLLKR (105 aa)). Asp-34 is a Mg(2+) binding site. Residues Arg-47 and Arg-71 each contribute to the DNA site. The Mg(2+) site is built by Asp-87, Glu-159, Glu-161, Asp-180, and Asp-182. The segment at 123–254 (EVMKFEKRLV…VTAYKLIKEH (132 aa)) is I-domain. Glu-159 provides a ligand contact to DNA. Residues Gly-232 and Asp-234 each coordinate DNA. Mg(2+) is bound at residue Asp-234. Residues 340 to 348 (VQGRLDGFF) are interaction with PCNA. Positions 354 to 381 (PGAKAGDKKGDKKRGSDSKASNNKKKRK) are disordered. Over residues 358–370 (AGDKKGDKKRGSD) the composition is skewed to basic and acidic residues.

It belongs to the XPG/RAD2 endonuclease family. FEN1 subfamily. Interacts with PCNA. Three molecules of FEN1 bind to one PCNA trimer with each molecule binding to one PCNA monomer. PCNA stimulates the nuclease activity without altering cleavage specificity. Requires Mg(2+) as cofactor. Phosphorylated. Phosphorylation upon DNA damage induces relocalization to the nuclear plasma.

It localises to the nucleus. It is found in the nucleolus. The protein localises to the nucleoplasm. The protein resides in the mitochondrion. Its function is as follows. Structure-specific nuclease with 5'-flap endonuclease and 5'-3' exonuclease activities involved in DNA replication and repair. During DNA replication, cleaves the 5'-overhanging flap structure that is generated by displacement synthesis when DNA polymerase encounters the 5'-end of a downstream Okazaki fragment. It enters the flap from the 5'-end and then tracks to cleave the flap base, leaving a nick for ligation. Also involved in the long patch base excision repair (LP-BER) pathway, by cleaving within the apurinic/apyrimidinic (AP) site-terminated flap. Acts as a genome stabilization factor that prevents flaps from equilibrating into structures that lead to duplications and deletions. Also possesses 5'-3' exonuclease activity on nicked or gapped double-stranded DNA, and exhibits RNase H activity. Also involved in replication and repair of rDNA and in repairing mitochondrial DNA. In Scheffersomyces stipitis (strain ATCC 58785 / CBS 6054 / NBRC 10063 / NRRL Y-11545) (Yeast), this protein is Flap endonuclease 1.